Consider the following 58-residue polypeptide: UPF0391 membrane protein GM21_0108 (58 aa).

The next 2 helical transmembrane spans lie at 4–24 (WALI…GGIA) and 33–53 (VLFY…LLAG).

This sequence belongs to the UPF0391 family.

The protein localises to the cell membrane. In Geobacter sp. (strain M21), this protein is UPF0391 membrane protein GM21_0108.